The primary structure comprises 810 residues: DNA-binding protein REB1 (810 aa).

Composition is skewed to basic and acidic residues over residues 1 to 10 (MPSGHNDKNA) and 29 to 44 (HQNH…LENK). Disordered stretches follow at residues 1 to 80 (MPSG…ENIS), 114 to 161 (NQQD…GVDD), 180 to 243 (NNNN…TNND), 294 to 313 (HGLN…LSNS), and 346 to 365 (QDTQ…AGSV). Composition is skewed to low complexity over residues 51–64 (IVES…NNND) and 124–135 (NNNTDNGNDSNN). Positions 149 to 161 (DKNKKDAGVGVDD) are enriched in basic and acidic residues. The span at 180–191 (NNNNNNSIANDS) shows a compositional bias: low complexity. A compositionally biased stretch (basic and acidic residues) spans 198–208 (HDNGNNHENSQ). The segment covering 346–355 (QDTQPHQQKS) has biased composition (polar residues). The residue at position 355 (S355) is a Phosphoserine. Residues 470–523 (HIFEQRGKWTAEEEQELAKLCAEKEGQWAEIGKTLGRMPEDCRDRWRNYVKCGT) form the HTH myb-type domain. A DNA-binding region (H-T-H motif) is located at residues 497 to 519 (WAEIGKTLGRMPEDCRDRWRNYV). The segment at 572 to 667 (QNDHRNNDED…STHSKSLSNT (96 aa)) is disordered. The span at 586 to 606 (ASAAAAAAAAIQEQQQLLQQK) shows a compositional bias: low complexity. Basic and acidic residues predominate over residues 627–636 (DNKDEDKPHD). The span at 643-667 (DDNSQNSMVPAPSATSTHSKSLSNT) shows a compositional bias: polar residues. The 26-residue stretch at 692–717 (NWTIVSERMGGTRSRIQCRYKWNKLV) folds into the Myb-like domain. A Glycyl lysine isopeptide (Lys-Gly) (interchain with G-Cter in SUMO) cross-link involves residue K807.

It localises to the nucleus. DNA-binding protein that recognizes sites within both the enhancer and the promoter of rRNA transcription, as well as upstream of many genes transcribed by RNA polymerase II. It is essential for cell growth. May stimulate or inhibit transcription. Specifically recognizes the sequence 5'-CCGGGTA-3' or 5'-CGGGTRR-3' (where R is any purine). A member of the general regulatory factors (GRFs) which act as genome partitioners. Acts as a chromatin insulator which are known as STARs (Subtelomeric anti-silencing region). STARs prevent negative or positive transcription influence by extending across chromatin to a promoter. The polypeptide is DNA-binding protein REB1 (REB1) (Saccharomyces cerevisiae (strain ATCC 204508 / S288c) (Baker's yeast)).